We begin with the raw amino-acid sequence, 186 residues long: A-type ATP synthase subunit E (186 aa).

Belongs to the V-ATPase E subunit family. As to quaternary structure, has multiple subunits with at least A(3), B(3), C, D, E, F, H, I and proteolipid K(x).

The protein resides in the cell membrane. Functionally, component of the A-type ATP synthase that produces ATP from ADP in the presence of a proton gradient across the membrane. The protein is A-type ATP synthase subunit E of Methanocella arvoryzae (strain DSM 22066 / NBRC 105507 / MRE50).